The following is a 148-amino-acid chain: 3-hydroxyacyl-[acyl-carrier-protein] dehydratase FabZ (148 aa).

Residue histidine 48 is part of the active site.

It belongs to the thioester dehydratase family. FabZ subfamily.

It is found in the cytoplasm. It carries out the reaction a (3R)-hydroxyacyl-[ACP] = a (2E)-enoyl-[ACP] + H2O. Its function is as follows. Involved in unsaturated fatty acids biosynthesis. Catalyzes the dehydration of short chain beta-hydroxyacyl-ACPs and long chain saturated and unsaturated beta-hydroxyacyl-ACPs. This chain is 3-hydroxyacyl-[acyl-carrier-protein] dehydratase FabZ, found in Nitratiruptor sp. (strain SB155-2).